Reading from the N-terminus, the 915-residue chain is Phototropin-2 (915 aa).

Residues 1 to 10 (MERPRAPPSP) show a composition bias toward pro residues. 2 disordered regions span residues 1–62 (MERP…EFQD) and 84–118 (DDGISFKLSSEVERSKNMSRRSSEESTSSESGAFP). 2 positions are modified to phosphoserine: serine 9 and serine 22. A compositionally biased stretch (polar residues) spans 27–43 (NPSSGKETHGSTSSSSK). Basic and acidic residues predominate over residues 93–107 (SEVERSKNMSRRSSE). Positions 120-193 (VSQELKTALS…AKIRDCVKNG (74 aa)) constitute a PAS 1 domain. Residue serine 121 is modified to Phosphoserine. FMN is bound at residue asparagine 169. An S-4a-FMN cysteine modification is found at cysteine 170. FMN contacts are provided by arginine 171, glutamine 174, arginine 187, asparagine 202, asparagine 212, glutamine 233, and lysine 238. Positions 194-248 (KSYCGRLLNYKKDGTPFWNLLTVTPIKDDQGNTIKFIGMQVEVSKYTEGVNDKAL) constitute a PAC 1 domain. The segment at 281 to 344 (HRKSQVQESV…KSSNNRHEDL (64 aa)) is disordered. 2 stretches are compositionally biased toward polar residues: residues 286–310 (VQESVSNDTMVKPDSSTTPTPGRQT) and 325–337 (RVSTPTGSKLKSS). Phosphoserine is present on serine 364. The PAS 2 domain occupies 376–449 (QGIDLATTLE…QKIRDAIRDQ (74 aa)). Asparagine 425 serves as a coordination point for FMN. Cysteine 426 bears the S-4a-FMN cysteine mark. FMN is bound by residues arginine 427, glutamine 430, arginine 443, asparagine 458, asparagine 468, phenylalanine 470, and glutamine 489. One can recognise a PAC 2 domain in the interval 450–504 (REITVQLINYTKSGKKFWNLFHLQPMRDQKGELQYFIGVQLDGSDHVEPLQNRLS). Residues 577-864 (FKPIKPLGSG…ANEIKQHAFF (288 aa)) form the Protein kinase domain. ATP contacts are provided by residues 583-591 (LGSGDTGSV) and lysine 606. Aspartate 702 acts as the Proton acceptor in catalysis. Residues 720 to 774 (DFDLSFMTTCTPQLIIPAAPSKRRRSKSQPLPTFVAEPSTQSNSFVGTEEYIAPE) form an activation loop region.

The protein belongs to the protein kinase superfamily. AGC Ser/Thr protein kinase family. In terms of assembly, homodimer. Interacts with PKS1, PKS2, RPT3 and PHOT1. Associates with CBC1 and CBC2. Binds to BHP. The cofactor is FMN. Post-translationally, autophosphorylated in response to blue light irradiation. In terms of processing, 2 molecules of FMN bind covalently to cysteines after exposure to blue light and are reversed in the dark. Expressed in leaves, stems and flowers, and to a lower extent in roots. Present in guard cells (at protein level).

The protein localises to the cell membrane. The enzyme catalyses L-seryl-[protein] + ATP = O-phospho-L-seryl-[protein] + ADP + H(+). It catalyses the reaction L-threonyl-[protein] + ATP = O-phospho-L-threonyl-[protein] + ADP + H(+). With respect to regulation, autophosphorylation is inhibited by staurosporine, but not by tyrphostin 9, sphingosine, GW5074 and BML-265. In terms of biological role, protein kinase that acts as a blue light photoreceptor in a signal-transduction pathway for photo-induced movements. Triggers the phosphorylation of AHA1 and AHA2 C-terminal penultimate Thr in guard cells to activate them and induce stomatal opening in response to blue light (BL). Also phosphorylates BLUS1, a kinase involved in stomatal opening. Mediates calcium spiking of extra- and intracellular origins in response to blue light. Involved in hypocotyl phototropism. Contributes to the chloroplast accumulation in low blue light and mediates their translocation (avoidance response) at high fluence. Regulates stomata opening and photomorphogenesis response of leaf tissue. Not involved in hypocotyl elongation inhibition, anthocyanin accumulation or cotyledon opening. In Arabidopsis thaliana (Mouse-ear cress), this protein is Phototropin-2.